The sequence spans 418 residues: Serine hydroxymethyltransferase (418 aa).

(6S)-5,6,7,8-tetrahydrofolate contacts are provided by residues leucine 121 and 125–127 (GHL). An N6-(pyridoxal phosphate)lysine modification is found at lysine 230. (6S)-5,6,7,8-tetrahydrofolate is bound by residues glutamate 246 and 355–357 (SPF).

It belongs to the SHMT family. Homodimer. Requires pyridoxal 5'-phosphate as cofactor.

The protein resides in the cytoplasm. It carries out the reaction (6R)-5,10-methylene-5,6,7,8-tetrahydrofolate + glycine + H2O = (6S)-5,6,7,8-tetrahydrofolate + L-serine. It functions in the pathway one-carbon metabolism; tetrahydrofolate interconversion. It participates in amino-acid biosynthesis; glycine biosynthesis; glycine from L-serine: step 1/1. Functionally, catalyzes the reversible interconversion of serine and glycine with tetrahydrofolate (THF) serving as the one-carbon carrier. This reaction serves as the major source of one-carbon groups required for the biosynthesis of purines, thymidylate, methionine, and other important biomolecules. Also exhibits THF-independent aldolase activity toward beta-hydroxyamino acids, producing glycine and aldehydes, via a retro-aldol mechanism. The sequence is that of Serine hydroxymethyltransferase from Streptococcus pneumoniae (strain ATCC 700669 / Spain 23F-1).